Reading from the N-terminus, the 704-residue chain is Polyribonucleotide nucleotidyltransferase (704 aa).

Mg(2+) contacts are provided by Asp488 and Asp494. A KH domain is found at 555–614 (PRITTIKINPEKIRDVIGKGGATIRALTEETGTTIELDDDGTVKIASSNGEATKEAIRRI). Residues 624–692 (GTVYNGKVVR…RQGRVRLSMK (69 aa)) form the S1 motif domain.

This sequence belongs to the polyribonucleotide nucleotidyltransferase family. Component of the RNA degradosome, which is a multiprotein complex involved in RNA processing and mRNA degradation. Requires Mg(2+) as cofactor.

The protein localises to the cytoplasm. The enzyme catalyses RNA(n+1) + phosphate = RNA(n) + a ribonucleoside 5'-diphosphate. In terms of biological role, involved in mRNA degradation. Catalyzes the phosphorolysis of single-stranded polyribonucleotides processively in the 3'- to 5'-direction. The chain is Polyribonucleotide nucleotidyltransferase from Shewanella halifaxensis (strain HAW-EB4).